The following is a 385-amino-acid chain: Putative F-box protein At1g47765 (385 aa).

Residues 1 to 19 (MEQQKQKKRKVVSKSKRTQ) show a composition bias toward basic residues. The interval 1–24 (MEQQKQKKRKVVSKSKRTQSKSAS) is disordered. The 50-residue stretch at 20-69 (SKSASSLPLDLTSEILLRLPEKSIARFRCVSKLWLSITTDPYFINLFETR) folds into the F-box domain.

This Arabidopsis thaliana (Mouse-ear cress) protein is Putative F-box protein At1g47765.